The sequence spans 538 residues: Chaperonin GroEL (538 aa).

ATP-binding positions include 29–32, 86–90, Gly-413, 476–478, and Asp-492; these read TIGP, DGTTT, and NAA.

This sequence belongs to the chaperonin (HSP60) family. As to quaternary structure, forms a cylinder of 14 subunits composed of two heptameric rings stacked back-to-back. Interacts with the co-chaperonin GroES.

The protein resides in the cytoplasm. The enzyme catalyses ATP + H2O + a folded polypeptide = ADP + phosphate + an unfolded polypeptide.. In terms of biological role, together with its co-chaperonin GroES, plays an essential role in assisting protein folding. The GroEL-GroES system forms a nano-cage that allows encapsulation of the non-native substrate proteins and provides a physical environment optimized to promote and accelerate protein folding. In Staphylococcus aureus (strain NCTC 8325 / PS 47), this protein is Chaperonin GroEL.